A 260-amino-acid chain; its full sequence is HTH-type transcriptional repressor NanR (260 aa).

An HTH gntR-type domain is found at 27–95 (KKLSDMVEEE…NGERARVSMP (69 aa)). The H-T-H motif DNA-binding region spans 55-74 (ERELMEFFNVGRPSVREALA).

It belongs to the NanR family.

In terms of biological role, transcriptional repressor that controls expression of the genes required for the catabolism of sialic acids. In Enterobacter sp. (strain 638), this protein is HTH-type transcriptional repressor NanR.